The sequence spans 317 residues: Ribonuclease Z (317 aa).

Zn(2+) is bound by residues histidine 61, histidine 63, aspartate 65, histidine 66, histidine 153, aspartate 221, and histidine 280. Aspartate 65 functions as the Proton acceptor in the catalytic mechanism.

Belongs to the RNase Z family. Homodimer. It depends on Zn(2+) as a cofactor.

The enzyme catalyses Endonucleolytic cleavage of RNA, removing extra 3' nucleotides from tRNA precursor, generating 3' termini of tRNAs. A 3'-hydroxy group is left at the tRNA terminus and a 5'-phosphoryl group is left at the trailer molecule.. Functionally, zinc phosphodiesterase, which displays some tRNA 3'-processing endonuclease activity. Probably involved in tRNA maturation, by removing a 3'-trailer from precursor tRNA. This is Ribonuclease Z from Alkaliphilus oremlandii (strain OhILAs) (Clostridium oremlandii (strain OhILAs)).